We begin with the raw amino-acid sequence, 376 residues long: Cyclic GMP-AMP synthase-like receptor 1 (376 aa).

2 residues coordinate Mg(2+): E77 and D79.

The protein belongs to the mab-21 family. The cofactor is Mg(2+). Mn(2+) is required as a cofactor.

It carries out the reaction UTP + ATP = 3',3'-cUAMP + 2 diphosphate. Nucleotidyltransferase that catalyzes the formation of cyclic UMP-AMP (3',3'-cUAMP) from ATP and UTP and plays a key role in innate immunity. Acts as a key sensor of double-stranded RNA (dsRNA), the presence of dsRNA in the cytoplasm being a danger signal that triggers the immune responses. Directly binds dsRNA, activating the nucleotidyltransferase activity, leading to synthesis of 3',3'-cUAMP, a second messenger that binds to and activates Sting, thereby triggering the immune response via activation of the NF-kappa-B transcription factor. The sequence is that of Cyclic GMP-AMP synthase-like receptor 1 from Stylophora pistillata (Smooth cauliflower coral).